The sequence spans 255 residues: NAD kinase (255 aa).

Residue Asp44 is the Proton acceptor of the active site. Residues 44 to 45 (DG), His49, 114 to 115 (NE), Asp144, Ala152, 155 to 160 (SAYNLS), and Gln216 each bind NAD(+).

It belongs to the NAD kinase family. A divalent metal cation serves as cofactor.

The protein localises to the cytoplasm. The enzyme catalyses NAD(+) + ATP = ADP + NADP(+) + H(+). In terms of biological role, involved in the regulation of the intracellular balance of NAD and NADP, and is a key enzyme in the biosynthesis of NADP. Catalyzes specifically the phosphorylation on 2'-hydroxyl of the adenosine moiety of NAD to yield NADP. This Rickettsia felis (strain ATCC VR-1525 / URRWXCal2) (Rickettsia azadi) protein is NAD kinase.